We begin with the raw amino-acid sequence, 70 residues long: MFPRSGLGLAVAAAVVAYLVLLLAQQLYMSNSSQCTIVITGESVSVVGCVYSEAFIELVKGLKPYYHPLG.

At 1-4 (MFPR) the chain is on the lumenal side. A helical membrane pass occupies residues 5 to 25 (SGLGLAVAAAVVAYLVLLLAQ). Over 26-70 (QLYMSNSSQCTIVITGESVSVVGCVYSEAFIELVKGLKPYYHPLG) the chain is Cytoplasmic.

Belongs to the Tymovirales TGBp3 protein family.

Its subcellular location is the host endoplasmic reticulum membrane. Plays a role in viral cell-to-cell propagation, by facilitating genome transport to neighboring plant cells through plasmosdesmata. May induce the formation of granular vesicles derived from the Endoplasmic reticulum, which align on actin filaments. The protein is Movement protein TGBp3 of Crataegus (hawthorn).